We begin with the raw amino-acid sequence, 98 residues long: uncharacterized protein (98 aa).

This is an uncharacterized protein from Sulfolobus islandicus filamentous virus (isolate Iceland/Hveragerdi) (SIFV).